Consider the following 136-residue polypeptide: Classical arabinogalactan protein 26 (136 aa).

The first 21 residues, 1–21, serve as a signal peptide directing secretion; that stretch reads MSVSLFTAFTVLSLCLHTSTS. Residues 38 to 95 are disordered; the sequence is APSSFSASTPAMSPDTSPLFPTPGSSEMSPSPSESSIMPTIPSSLSPPNPDAVTPDPL. The segment covering 40–53 has biased composition (polar residues); the sequence is SSFSASTPAMSPDT. Residues 59-81 are compositionally biased toward low complexity; it reads TPGSSEMSPSPSESSIMPTIPSS. S108 is lipidated: GPI-anchor amidated serine. Residues 109-136 constitute a propeptide, removed in mature form; it reads SSVCLVSSQLSSLLLVLLMLLLAFCSFF.

Belongs to the classical AGP family. O-glycosylated on the hydroxyproline residues.

It localises to the cell membrane. Functionally, proteoglycan that seems to be implicated in diverse developmental roles such as differentiation, cell-cell recognition, embryogenesis and programmed cell death. In Arabidopsis thaliana (Mouse-ear cress), this protein is Classical arabinogalactan protein 26 (AGP26).